A 626-amino-acid polypeptide reads, in one-letter code: 4-hydroxy-3-methylbut-2-en-1-yl diphosphate synthase (flavodoxin) (626 aa).

4 residues coordinate [4Fe-4S] cluster: C521, C524, C555, and E562.

The protein belongs to the IspG family. It depends on [4Fe-4S] cluster as a cofactor.

It carries out the reaction (2E)-4-hydroxy-3-methylbut-2-enyl diphosphate + oxidized [flavodoxin] + H2O + 2 H(+) = 2-C-methyl-D-erythritol 2,4-cyclic diphosphate + reduced [flavodoxin]. It participates in isoprenoid biosynthesis; isopentenyl diphosphate biosynthesis via DXP pathway; isopentenyl diphosphate from 1-deoxy-D-xylulose 5-phosphate: step 5/6. Its function is as follows. Converts 2C-methyl-D-erythritol 2,4-cyclodiphosphate (ME-2,4cPP) into 1-hydroxy-2-methyl-2-(E)-butenyl 4-diphosphate. This chain is 4-hydroxy-3-methylbut-2-en-1-yl diphosphate synthase (flavodoxin), found in Bacteroides fragilis (strain YCH46).